A 236-amino-acid chain; its full sequence is Purine nucleoside phosphorylase DeoD-type (236 aa).

His5 contributes to the a purine D-ribonucleoside binding site. Phosphate is bound by residues Gly21, Arg25, Arg44, and 88 to 91 (RVGT). A purine D-ribonucleoside contacts are provided by residues 180–182 (EME) and 204–205 (SD). Catalysis depends on Asp205, which acts as the Proton donor.

This sequence belongs to the PNP/UDP phosphorylase family. As to quaternary structure, homohexamer; trimer of homodimers.

The enzyme catalyses a purine D-ribonucleoside + phosphate = a purine nucleobase + alpha-D-ribose 1-phosphate. It carries out the reaction a purine 2'-deoxy-D-ribonucleoside + phosphate = a purine nucleobase + 2-deoxy-alpha-D-ribose 1-phosphate. Its function is as follows. Catalyzes the reversible phosphorolytic breakdown of the N-glycosidic bond in the beta-(deoxy)ribonucleoside molecules, with the formation of the corresponding free purine bases and pentose-1-phosphate. The protein is Purine nucleoside phosphorylase DeoD-type of Shewanella baltica (strain OS155 / ATCC BAA-1091).